Consider the following 247-residue polypeptide: Molybdate/tungstate transport system permease protein WtpB (247 aa).

Residues 1-8 lie on the Cytoplasmic side of the membrane; it reads MRRDYTLY. The helical transmembrane segment at 9–29 threads the bilayer; sequence LFAALGTFLIAYIAVPIAVIF. The Extracellular segment spans residues 30-55; it reads LKQASDVEMLVKTLHDPYVIEAIRNS. In terms of domain architecture, ABC transmembrane type-1 spans 52–238; it reads IRNSLLTATA…SLSLGIFVIL (187 aa). The chain crosses the membrane as a helical span at residues 56–76; it reads LLTATATALIALLFGVPLGYV. Residues 77 to 90 are Cytoplasmic-facing; sequence LARKDFPGKSAVQA. The helical transmembrane segment at 91-111 threads the bilayer; that stretch reads LVDVPIVIPHSVVGIMLLVTF. The Extracellular portion of the chain corresponds to 112 to 114; sequence SNS. The helical transmembrane segment at 115 to 135 threads the bilayer; it reads ILDSYKGIVAAMLFVSAPFTI. The Cytoplasmic segment spans residues 136-163; the sequence is NAARDGFLAVDEKLEAVARTLGASRWRA. Residues 164–184 traverse the membrane as a helical segment; sequence FLSISLPMAFPSIASGAIMTW. Residues 185–222 lie on the Extracellular side of the membrane; the sequence is ARAISEVGAILIVAYYPKTAQVLILEYFNNYGLRASRP. Residues 223–243 form a helical membrane-spanning segment; it reads IAVIMVSLSLGIFVILRWLVG. Residues 244-247 are Cytoplasmic-facing; that stretch reads RKNA.

The protein belongs to the binding-protein-dependent transport system permease family. The complex is composed of two ATP-binding proteins (WtpC), two transmembrane proteins (WtpB) and a solute-binding protein (WtpA).

The protein localises to the cell membrane. In terms of biological role, part of the ABC transporter complex WtpABC involved in molybdate/tungstate import. Probably responsible for the translocation of the substrate across the membrane. This is Molybdate/tungstate transport system permease protein WtpB (wtpB) from Thermococcus kodakarensis (strain ATCC BAA-918 / JCM 12380 / KOD1) (Pyrococcus kodakaraensis (strain KOD1)).